Reading from the N-terminus, the 375-residue chain is Chaperone protein DnaJ (375 aa).

The 66-residue stretch at 6 to 71 (DYYEILGVSR…DKRARYDQYG (66 aa)) folds into the J domain. The CR-type zinc finger occupies 132–214 (GTTKKITIPR…CQGSGKVRKQ (83 aa)). 8 residues coordinate Zn(2+): Cys-145, Cys-148, Cys-162, Cys-165, Cys-188, Cys-191, Cys-202, and Cys-205. 4 CXXCXGXG motif repeats span residues 145–152 (CDTCNGTG), 162–169 (CPQCNGSG), 188–195 (CDRCGGRG), and 202–209 (CPTCQGSG). A disordered region spans residues 222 to 243 (PPGVDTGTRLRMPNEGEAGDKG).

This sequence belongs to the DnaJ family. As to quaternary structure, homodimer. It depends on Zn(2+) as a cofactor.

It localises to the cytoplasm. In terms of biological role, participates actively in the response to hyperosmotic and heat shock by preventing the aggregation of stress-denatured proteins and by disaggregating proteins, also in an autonomous, DnaK-independent fashion. Unfolded proteins bind initially to DnaJ; upon interaction with the DnaJ-bound protein, DnaK hydrolyzes its bound ATP, resulting in the formation of a stable complex. GrpE releases ADP from DnaK; ATP binding to DnaK triggers the release of the substrate protein, thus completing the reaction cycle. Several rounds of ATP-dependent interactions between DnaJ, DnaK and GrpE are required for fully efficient folding. Also involved, together with DnaK and GrpE, in the DNA replication of plasmids through activation of initiation proteins. This chain is Chaperone protein DnaJ, found in Halothermothrix orenii (strain H 168 / OCM 544 / DSM 9562).